The sequence spans 489 residues: Glutamyl-tRNA(Gln) amidotransferase subunit A (489 aa).

Catalysis depends on charge relay system residues Lys-77 and Ser-157. The Acyl-ester intermediate role is filled by Ser-181.

It belongs to the amidase family. GatA subfamily. As to quaternary structure, heterotrimer of A, B and C subunits.

The catalysed reaction is L-glutamyl-tRNA(Gln) + L-glutamine + ATP + H2O = L-glutaminyl-tRNA(Gln) + L-glutamate + ADP + phosphate + H(+). Functionally, allows the formation of correctly charged Gln-tRNA(Gln) through the transamidation of misacylated Glu-tRNA(Gln) in organisms which lack glutaminyl-tRNA synthetase. The reaction takes place in the presence of glutamine and ATP through an activated gamma-phospho-Glu-tRNA(Gln). The sequence is that of Glutamyl-tRNA(Gln) amidotransferase subunit A from Caulobacter vibrioides (strain ATCC 19089 / CIP 103742 / CB 15) (Caulobacter crescentus).